The sequence spans 142 residues: MVLTAGDKANVKTVWSKVGSHLEDYGSETLERLFVVYPSTKTYFPHFDLHHDSPQVRAHGKKVLSALGEAVNHIDDIPGALSKLSDLHAQNLRVDPVNFKLLNLCFVVVVGRHHPTILTPEVHVSLDKFLSAVAQNLTSKYR.

The region spanning 2–142 (VLTAGDKANV…VAQNLTSKYR (141 aa)) is the Globin domain. Position 59 (histidine 59) interacts with O2. A heme b-binding site is contributed by histidine 88.

This sequence belongs to the globin family. In terms of assembly, tetramer of alpha-1, alpha-2 and two identical beta chains. In terms of tissue distribution, red blood cells.

Functionally, involved in oxygen transport from the lung to the various peripheral tissues. The polypeptide is Hemoglobin A subunit alpha-2 (Aldabrachelys gigantea (Aldabra giant tortoise)).